We begin with the raw amino-acid sequence, 967 residues long: Leucine--tRNA ligase (967 aa).

Positions 43–53 match the 'HIGH' region motif; that stretch reads PYLSGHLHVGH. The short motif at 650 to 654 is the 'KMSKS' region element; it reads KMSKS. Lys-653 provides a ligand contact to ATP.

Belongs to the class-I aminoacyl-tRNA synthetase family.

The protein localises to the cytoplasm. It catalyses the reaction tRNA(Leu) + L-leucine + ATP = L-leucyl-tRNA(Leu) + AMP + diphosphate. The chain is Leucine--tRNA ligase from Pyrococcus furiosus (strain ATCC 43587 / DSM 3638 / JCM 8422 / Vc1).